Consider the following 675-residue polypeptide: Potassium-transporting ATPase ATP-binding subunit (675 aa).

The next 4 membrane-spanning stretches (helical) occupy residues 34–54 (IMFV…FPDI), 65–85 (LITI…SEAF), 216–236 (IALF…IVTL), and 245–265 (LILP…TTIG). The active-site 4-aspartylphosphate intermediate is the Asp-304. ATP is bound by residues Asp-341, Glu-345, 372 to 379 (FTAETRMS), and Lys-390. Mg(2+)-binding residues include Asp-513 and Asp-517. 3 helical membrane-spanning segments follow: residues 569 to 591 (ALTT…ALMM), 611 to 631 (AIIS…PIAM), and 644 to 664 (IFIN…FLGI).

The protein belongs to the cation transport ATPase (P-type) (TC 3.A.3) family. Type IA subfamily. The system is composed of three essential subunits: KdpA, KdpB and KdpC.

It localises to the cell membrane. It catalyses the reaction K(+)(out) + ATP + H2O = K(+)(in) + ADP + phosphate + H(+). Functionally, part of the high-affinity ATP-driven potassium transport (or Kdp) system, which catalyzes the hydrolysis of ATP coupled with the electrogenic transport of potassium into the cytoplasm. This subunit is responsible for energy coupling to the transport system and for the release of the potassium ions to the cytoplasm. This Staphylococcus aureus (strain MSSA476) protein is Potassium-transporting ATPase ATP-binding subunit.